We begin with the raw amino-acid sequence, 306 residues long: MKGTAMNGILPLYKPTGMTSADAVYHARKILGIKKIGHSGTLDPNVDGVLPLAIGAGTKAVPQLMASGKVYTGEITLGFATTTEDLDGEVVDKTPLTQPFTADQLDAALTAWTGNITQIPPMFSAVKVNGRRLYEYARAGETVKRPERQATVSQFTRTDEPVFSATDGTQRFRFEVHVSKGTYIRTLAVDVGKTLGVAAVMSQLTRVKSGGFTLKQAVSIEQLKAHAAAGTLADVIQPIDIAFADLPQVDLTVEQFEAISHGRFLSLDQQTPRVRLHFAGVLKAIYRREDDQYRPDLMFLANEKNV.

D43 functions as the Nucleophile in the catalytic mechanism.

Belongs to the pseudouridine synthase TruB family. Type 1 subfamily.

The catalysed reaction is uridine(55) in tRNA = pseudouridine(55) in tRNA. Functionally, responsible for synthesis of pseudouridine from uracil-55 in the psi GC loop of transfer RNAs. This chain is tRNA pseudouridine synthase B, found in Lacticaseibacillus casei (strain BL23) (Lactobacillus casei).